A 716-amino-acid polypeptide reads, in one-letter code: Fatty acid oxidation complex subunit alpha (716 aa).

The interval 1 to 189 (MIYQSPTIQV…KVGAVDAVVA (189 aa)) is enoyl-CoA hydratase/isomerase. A substrate-binding site is contributed by D296. The segment at 311–716 (KDVKSAAVLG…AANNGSYYQA (406 aa)) is 3-hydroxyacyl-CoA dehydrogenase. Residues M324, D343, 400–402 (VVE), K407, and S429 each bind NAD(+). H450 (for 3-hydroxyacyl-CoA dehydrogenase activity) is an active-site residue. N453 is a binding site for NAD(+). Residues N500 and Y660 each contribute to the substrate site.

It in the N-terminal section; belongs to the enoyl-CoA hydratase/isomerase family. This sequence in the C-terminal section; belongs to the 3-hydroxyacyl-CoA dehydrogenase family. In terms of assembly, heterotetramer of two alpha chains (FadB) and two beta chains (FadA).

It carries out the reaction a (3S)-3-hydroxyacyl-CoA + NAD(+) = a 3-oxoacyl-CoA + NADH + H(+). The catalysed reaction is a (3S)-3-hydroxyacyl-CoA = a (2E)-enoyl-CoA + H2O. The enzyme catalyses a 4-saturated-(3S)-3-hydroxyacyl-CoA = a (3E)-enoyl-CoA + H2O. It catalyses the reaction (3S)-3-hydroxybutanoyl-CoA = (3R)-3-hydroxybutanoyl-CoA. It carries out the reaction a (3Z)-enoyl-CoA = a 4-saturated (2E)-enoyl-CoA. The catalysed reaction is a (3E)-enoyl-CoA = a 4-saturated (2E)-enoyl-CoA. It participates in lipid metabolism; fatty acid beta-oxidation. Functionally, involved in the aerobic and anaerobic degradation of long-chain fatty acids via beta-oxidation cycle. Catalyzes the formation of 3-oxoacyl-CoA from enoyl-CoA via L-3-hydroxyacyl-CoA. It can also use D-3-hydroxyacyl-CoA and cis-3-enoyl-CoA as substrate. In Shewanella sp. (strain ANA-3), this protein is Fatty acid oxidation complex subunit alpha.